We begin with the raw amino-acid sequence, 603 residues long: Penicillin-binding protein activator LpoA (603 aa).

The N-terminal stretch at 1–26 (MAMNHHQRRSVPRLLTPIALSIVLSA) is a signal peptide. Cys-27 carries N-palmitoyl cysteine lipidation. Cys-27 carries the S-diacylglycerol cysteine lipid modification.

The protein belongs to the LpoA family. As to quaternary structure, interacts with PBP1a.

Its subcellular location is the cell outer membrane. Regulator of peptidoglycan synthesis that is essential for the function of penicillin-binding protein 1A (PBP1a). This is Penicillin-binding protein activator LpoA from Vibrio cholerae serotype O1 (strain ATCC 39541 / Classical Ogawa 395 / O395).